The sequence spans 444 residues: Protein kinase C and casein kinase substrate in neurons protein 1 (444 aa).

2 positions are modified to phosphoserine: Ser2 and Ser79. The F-BAR domain maps to 13 to 283 (EETTDSFWEV…AIRGADAQDD (271 aa)). A coiled-coil region spans residues 26-275 (KRTVKRIDDG…QVYRELEQAI (250 aa)). At Thr184 the chain carries Phosphothreonine. The tract at residues 313–384 (AAKKEKQPKK…NGGSNPFDED (72 aa)) is disordered. Basic and acidic residues predominate over residues 314–324 (AKKEKQPKKAE). Over residues 336 to 358 (ESTSQAGDRGSVSSYDRGQTYAT) the composition is skewed to polar residues. Phosphoserine occurs at positions 346, 348, 349, 361, and 365. Residues 385 to 444 (AKGVRVRALYDYDGQEQDELSFKAGDELTKLGEEDEQGWCRGRLDSGQLGLYPANYVEVV) enclose the SH3 domain. Tyr394 is modified (phosphotyrosine). 2 positions are modified to phosphoserine: Ser405 and Ser430.

It belongs to the PACSIN family. As to quaternary structure, homodimer. May form heterooligomers with other PACSINs. Interacts with MAPT. Interacts (via SH3 domain) with SYNJ1 and WASL. Interacts (via SH3 domain) with DNM1; the interaction is reduced by DNM1 phosphorylation. Interacts with DNM2 and DNM3. Interacts with both COBL and DBNL. Identified in a complex composed of COBL, PACSIN1 and WASL. Interacts with EHD1 and EHD3. Interacts with TRPV4. Post-translationally, phosphorylated by casein kinase 2 (CK2) and protein kinase C (PKC).

The protein localises to the cytoplasm. Its subcellular location is the cell projection. It is found in the synapse. The protein resides in the synaptosome. It localises to the ruffle membrane. The protein localises to the membrane. Its subcellular location is the cytoplasmic vesicle membrane. It is found in the cytosol. The protein resides in the cell membrane. Functionally, binds to membranes via its F-BAR domain and mediates membrane tubulation. Plays a role in the reorganization of the microtubule cytoskeleton via its interaction with MAPT; this decreases microtubule stability and inhibits MAPT-induced microtubule polymerization. Plays a role in cellular transport processes by recruiting DNM1, DNM2 and DNM3 to membranes. Plays a role in the reorganization of the actin cytoskeleton and in neuron morphogenesis via its interaction with COBL and WASL, and by recruiting COBL to the cell cortex. Plays a role in the regulation of neurite formation, neurite branching and the regulation of neurite length. Required for normal synaptic vesicle endocytosis; this process retrieves previously released neurotransmitters to accommodate multiple cycles of neurotransmission. Required for normal excitatory and inhibitory synaptic transmission. This chain is Protein kinase C and casein kinase substrate in neurons protein 1 (PACSIN1), found in Bos taurus (Bovine).